Consider the following 240-residue polypeptide: Large ribosomal subunit protein uL1 (240 aa).

It belongs to the universal ribosomal protein uL1 family. Part of the 50S ribosomal subunit.

In terms of biological role, binds directly to 23S rRNA. The L1 stalk is quite mobile in the ribosome, and is involved in E site tRNA release. Its function is as follows. Protein L1 is also a translational repressor protein, it controls the translation of the L11 operon by binding to its mRNA. The sequence is that of Large ribosomal subunit protein uL1 from Streptomyces griseus subsp. griseus (strain JCM 4626 / CBS 651.72 / NBRC 13350 / KCC S-0626 / ISP 5235).